A 150-amino-acid chain; its full sequence is Small ribosomal subunit protein uS13 (150 aa).

It belongs to the universal ribosomal protein uS13 family. Part of the 30S ribosomal subunit. Forms a loose heterodimer with protein S19. Forms two bridges to the 50S subunit in the 70S ribosome.

In terms of biological role, located at the top of the head of the 30S subunit, it contacts several helices of the 16S rRNA. In the 70S ribosome it contacts the 23S rRNA (bridge B1a) and protein L5 of the 50S subunit (bridge B1b), connecting the 2 subunits; these bridges are implicated in subunit movement. This chain is Small ribosomal subunit protein uS13, found in Aeropyrum pernix (strain ATCC 700893 / DSM 11879 / JCM 9820 / NBRC 100138 / K1).